Reading from the N-terminus, the 695-residue chain is tRNA wybutosine-synthesizing protein 4 (695 aa).

Residues Lys-38, Arg-88, Gly-115, 146-147 (DY), 196-197 (DL), and Glu-224 each bind S-adenosyl-L-methionine. The active-site Proton donor; for both methylation and methoxycarbonylation activities is Arg-88. Residue Tyr-229 is the Proton acceptor; for methoxycarbonylation activity of the active site.

Belongs to the methyltransferase superfamily. LCMT family.

The protein localises to the cytoplasm. It localises to the mitochondrion. It carries out the reaction 7-[(3S)-3-amino-3-carboxypropyl]wyosine(37) in tRNA(Phe) + S-adenosyl-L-methionine = 7-[(3S)-(3-amino-3-methoxycarbonyl)propyl]wyosine(37) in tRNA(Phe) + S-adenosyl-L-homocysteine. The catalysed reaction is 7-[(3S)-(3-amino-3-methoxycarbonyl)propyl]wyosine(37) in tRNA(Phe) + S-adenosyl-L-methionine + CO2 = wybutosine(37) in tRNA(Phe) + S-adenosyl-L-homocysteine + 2 H(+). It participates in tRNA modification; wybutosine-tRNA(Phe) biosynthesis. Its function is as follows. S-adenosyl-L-methionine-dependent methyltransferase that acts as a component of the wybutosine biosynthesis pathway. Wybutosine is a hyper modified guanosine with a tricyclic base found at the 3'-position adjacent to the anticodon of eukaryotic phenylalanine tRNA. Catalyzes the final 2 independent reactions, methylation of the alpha-carboxy group of wybutosine-72 to form wybutosine-58, and methoxycarbonylation of alpha-amino group of wybutosine-58 through the fixation of CO(2) to complete wybutosine. The polypeptide is tRNA wybutosine-synthesizing protein 4 (PPM2) (Saccharomyces cerevisiae (strain ATCC 204508 / S288c) (Baker's yeast)).